Reading from the N-terminus, the 757-residue chain is Protein transport protein SEC23-2 (757 aa).

Positions 56, 61, 80, and 83 each coordinate Zn(2+).

This sequence belongs to the SEC23/SEC24 family. SEC23 subfamily. In terms of assembly, the COPII coat is composed of at least 5 proteins: the SEC23/24 complex, the SEC13/31 complex, and the protein SAR1.

Its subcellular location is the cytoplasm. It is found in the cytoplasmic vesicle. It localises to the COPII-coated vesicle membrane. The protein localises to the endoplasmic reticulum membrane. The protein resides in the golgi apparatus membrane. Its function is as follows. Component of the coat protein complex II (COPII) which promotes the formation of transport vesicles from the endoplasmic reticulum (ER). The coat has two main functions, the physical deformation of the endoplasmic reticulum membrane into vesicles and the selection of cargo molecules. In Candida glabrata (strain ATCC 2001 / BCRC 20586 / JCM 3761 / NBRC 0622 / NRRL Y-65 / CBS 138) (Yeast), this protein is Protein transport protein SEC23-2 (SEC232).